The sequence spans 183 residues: Adenylate kinase (183 aa).

ATP is bound at residue 7 to 15; that stretch reads GVAGVGKTT.

This sequence belongs to the archaeal adenylate kinase family.

Its subcellular location is the cytoplasm. The enzyme catalyses AMP + ATP = 2 ADP. In Thermoplasma acidophilum (strain ATCC 25905 / DSM 1728 / JCM 9062 / NBRC 15155 / AMRC-C165), this protein is Adenylate kinase (adkA).